Here is a 360-residue protein sequence, read N- to C-terminus: S-adenosylmethionine:tRNA ribosyltransferase-isomerase (360 aa).

Belongs to the QueA family. In terms of assembly, monomer.

It localises to the cytoplasm. It carries out the reaction 7-aminomethyl-7-carbaguanosine(34) in tRNA + S-adenosyl-L-methionine = epoxyqueuosine(34) in tRNA + adenine + L-methionine + 2 H(+). The protein operates within tRNA modification; tRNA-queuosine biosynthesis. Its function is as follows. Transfers and isomerizes the ribose moiety from AdoMet to the 7-aminomethyl group of 7-deazaguanine (preQ1-tRNA) to give epoxyqueuosine (oQ-tRNA). This chain is S-adenosylmethionine:tRNA ribosyltransferase-isomerase, found in Burkholderia pseudomallei (strain 1106a).